A 104-amino-acid chain; its full sequence is L-rhamnose mutarotase (104 aa).

Position 18 (Y18) interacts with substrate. H22 functions as the Proton donor in the catalytic mechanism. Substrate-binding positions include Y41 and 76 to 77 (WW).

The protein belongs to the rhamnose mutarotase family. In terms of assembly, homodimer.

It localises to the cytoplasm. It carries out the reaction alpha-L-rhamnose = beta-L-rhamnose. The protein operates within carbohydrate metabolism; L-rhamnose metabolism. In terms of biological role, involved in the anomeric conversion of L-rhamnose. The chain is L-rhamnose mutarotase from Escherichia coli O1:K1 / APEC.